A 238-amino-acid polypeptide reads, in one-letter code: MGSASGEEREGPLGLYLEIKMQRKDIVSPVDTMGCSITPSCRTEEERRFHILVSLLLSSQTKDEVTYEAMARLRKLLPESAATDGEARGGLTIERVANSDVKHINECIKKVGFHNRKAANLKKIAEILREKGLPREMKDLISLPGIGNKMALLYMSHACNRTVGISVDTHVHRISNRIGLVRTRDVESTRRELERVVPRKEWKTINNILVGFGQTICVAKRPRCEECCIRGRCPSSLF.

The HhH domain maps to 129–155 (REKGLPREMKDLISLPGIGNKMALLYM). Lysine 149 (nucleophile; for N-glycosylase activity) is an active-site residue. [4Fe-4S] cluster is bound by residues cysteine 217, cysteine 224, cysteine 227, and cysteine 233.

Belongs to the Nth/MutY family. [4Fe-4S] cluster is required as a cofactor.

The protein resides in the nucleus. It localises to the mitochondrion. It carries out the reaction 2'-deoxyribonucleotide-(2'-deoxyribose 5'-phosphate)-2'-deoxyribonucleotide-DNA = a 3'-end 2'-deoxyribonucleotide-(2,3-dehydro-2,3-deoxyribose 5'-phosphate)-DNA + a 5'-end 5'-phospho-2'-deoxyribonucleoside-DNA + H(+). In terms of biological role, bifunctional DNA N-glycosylase with associated apurinic/apyrimidinic (AP) lyase function that catalyzes the first step in base excision repair (BER), the primary repair pathway for the repair of oxidative DNA damage. The DNA N-glycosylase activity releases the damaged DNA base from DNA by cleaving the N-glycosidic bond, leaving an AP site. The AP lyase activity cleaves the phosphodiester bond 3' to the AP site by a beta-elimination. Primarily recognizes and repairs oxidative base damage of pyrimidines. The polypeptide is Endonuclease III homolog (Encephalitozoon cuniculi (strain GB-M1) (Microsporidian parasite)).